Reading from the N-terminus, the 217-residue chain is Uracil-DNA glycosylase (217 aa).

D62 (proton acceptor) is an active-site residue.

The protein belongs to the uracil-DNA glycosylase (UDG) superfamily. UNG family.

It localises to the cytoplasm. It carries out the reaction Hydrolyzes single-stranded DNA or mismatched double-stranded DNA and polynucleotides, releasing free uracil.. Excises uracil residues from the DNA which can arise as a result of misincorporation of dUMP residues by DNA polymerase or due to deamination of cytosine. In Streptococcus mutans serotype c (strain ATCC 700610 / UA159), this protein is Uracil-DNA glycosylase.